The following is a 331-amino-acid chain: Histone-lysine N-methyltransferase, H3 lysine-9 specific dim-5 (331 aa).

The Pre-SET domain maps to 77–159 (VGCSCASDEE…DCPNRVVERG (83 aa)). Zn(2+)-binding residues include C79, C81, C87, C92, C94, C141, C145, C147, and C151. One can recognise an SET domain in the interval 162–297 (VPLQIFRTKD…KGTELTFDYV (136 aa)). S-adenosyl-L-methionine is bound by residues 172 to 174 (RGW), D215, Y217, R251, and 254 to 255 (NH). Zn(2+) is bound by residues C257, C319, C321, and C326. Residues 315-331 (EMTKCLCGTAKCRGYLW) form the Post-SET domain.

The protein belongs to the class V-like SAM-binding methyltransferase superfamily. Histone-lysine methyltransferase family. Suvar3-9 subfamily.

The protein localises to the nucleus. It is found in the chromosome. The catalysed reaction is L-lysyl(9)-[histone H3] + 3 S-adenosyl-L-methionine = N(6),N(6),N(6)-trimethyl-L-lysyl(9)-[histone H3] + 3 S-adenosyl-L-homocysteine + 3 H(+). Its function is as follows. Histone methyltransferase that specifically trimethylates histone H3 to form H3K9me3. H3K9me3 marks chromatin regions for DNA methylation. Dim-5 recognizes Arg-8 to Gly-12 of the H3 tail with Thr-11 and Gly-12 being the most important specificity determinants, the recognition of whcih is important to distinguish H3K9 from H3K27 and H4K20. This chain is Histone-lysine N-methyltransferase, H3 lysine-9 specific dim-5 (dim-5), found in Neurospora crassa (strain ATCC 24698 / 74-OR23-1A / CBS 708.71 / DSM 1257 / FGSC 987).